The chain runs to 680 residues: WD repeat-containing protein 48 homolog (680 aa).

WD repeat units follow at residues 26–65 (QHRNGVNSLQLDPNNGKLYSAGRDAIIRVWNTRSESSEKY), 71–110 (HHNDWVNDIVLCCNGRNLISASCDTTVKVWNAQKGFCMST), 113–152 (THRDYVQALAYAKDREQVASAGLDKAIFLWDVNTLTALTA), 164–203 (GSKDSIYSLAMNPSGTVIVSGSTENILRIWDPRTCMRSMK), 206–245 (GHTENVRCLVVSPDGNQVVSGSSDGTIKVWNLGQQRCVQT), 248–287 (VHKEGVWSLLMSENFQYIISGSRDQNIIVTEMRNPSNKTL), 290–329 (EEKAPVLSLGYNMDKTGVWATTWNSDIRCWKLPMYDRGTL), and 350–389 (KGGAAIKECTVLNDKRYILTKDSQDQVVLYDVLRVVKKDT). The tract at residues 594–618 (TPSGANANNSLQNSQSDGNSEGSQL) is disordered. Positions 596–609 (SGANANNSLQNSQS) are enriched in low complexity.

Belongs to the WD repeat WDR48 family. In terms of assembly, catalytic component of the Usp12-46 deubiquitylase complex consisting of Usp12-46, Wdr20 and Uaf1; regulatory subunit that, together wtih Wdr20, stabilizes Usp12-46. The Usp12-46 deubiquitylase complex associates with arr/arrow; the interaction leads to deubiquitination and stabilization of arr/arrow.

Functionally, regulatory component of the Usp12-46 deubiquitylase complex. activates deubiquitination by increasing the catalytic turnover without increasing the affinity of deubiquitinating enzymes for the substrate. The complex deubiquitylates the wg/wingless-signaling receptor arr/arrow, which stabilizes the receptor and increases its concentration at the cell surface; this enhances the sensitivity of cells to wg/wingless-signal stimulation. This increases the amplitude and spatial range of the signaling response to the wg/wingless morphogen gradient, facilitating the precise concentration-dependent regulation of its target genes. Together with Wdr20 and Usp12-46 required for wg/wingless-mediated signaling in the wing imaginal disc and for wg/wingless-dependent regulation of intestinal stem cell proliferation. The polypeptide is WD repeat-containing protein 48 homolog (Drosophila persimilis (Fruit fly)).